We begin with the raw amino-acid sequence, 748 residues long: Catalase-peroxidase (748 aa).

The tryptophyl-tyrosyl-methioninium (Trp-Tyr) (with M-255) cross-link spans 96–229 (WHSAGTYRVA…LAAAHMGLIY (134 aa)). His97 acts as the Proton acceptor in catalysis. Residues 229–255 (YVNPEGPDGNPDPIAAAKDIRTTFGRM) constitute a cross-link (tryptophyl-tyrosyl-methioninium (Tyr-Met) (with W-96)). His270 is a binding site for heme b.

It belongs to the peroxidase family. Peroxidase/catalase subfamily. In terms of assembly, homodimer or homotetramer. The cofactor is heme b. Formation of the three residue Trp-Tyr-Met cross-link is important for the catalase, but not the peroxidase activity of the enzyme.

The protein localises to the cytoplasm. It carries out the reaction H2O2 + AH2 = A + 2 H2O. The catalysed reaction is 2 H2O2 = O2 + 2 H2O. Bifunctional enzyme with both catalase and broad-spectrum peroxidase activity. Plays a crucial role in oxidative stress response during infection. Acts as an antigen and elicits antibody response in P.marneffei-infected AIDS patients, healthy people working in mycological laboratory, and healthy people in an endemic area. The protein is Catalase-peroxidase of Talaromyces marneffei (Penicillium marneffei).